The chain runs to 987 residues: UPF0182 protein Lxx09300 (987 aa).

Transmembrane regions (helical) follow at residues 17-37 (VWTT…FAGL), 59-79 (AAIA…WVVI), 108-128 (RLAM…SAAS), 167-187 (VGFA…TCYL), 206-226 (VQIS…VWLD), 256-276 (AVLA…AFTG), and 283-303 (VGTA…PWAI). 2 disordered regions span residues 700-719 (RDDA…DPTL) and 886-947 (TAGD…ALQQ). Over residues 705–719 (TTPNDPTSSPTDPTL) the composition is skewed to low complexity. The segment covering 897-932 (GGSGGGSSGDAGSSAGGGSSGGGGSSAGGSSSGSGS) has biased composition (gly residues). Low complexity predominate over residues 933 to 947 (SGTQSNAALQRALQQ).

This sequence belongs to the UPF0182 family.

Its subcellular location is the cell membrane. The sequence is that of UPF0182 protein Lxx09300 from Leifsonia xyli subsp. xyli (strain CTCB07).